The following is a 67-amino-acid chain: Conotoxin Cl6.6a (67 aa).

Positions 1 to 24 (MKLTCVLIAAVLLLAVCQLDSADA) are cleaved as a signal peptide. Residues 25-37 (TGYMRKNPSLRSP) constitute a propeptide that is removed on maturation. 3 cysteine pairs are disulfide-bonded: cysteine 43/cysteine 57, cysteine 50/cysteine 61, and cysteine 56/cysteine 65.

It belongs to the conotoxin O1 superfamily. Expressed by the venom duct.

It localises to the secreted. The polypeptide is Conotoxin Cl6.6a (Californiconus californicus (California cone)).